A 521-amino-acid chain; its full sequence is CD166 antigen (521 aa).

The Extracellular segment spans residues 1–465 (GSPVFIAFRS…NREQVNHRAT (465 aa)). N33, N105, N244, N299, N395, N418, and N437 each carry an N-linked (GlcNAc...) asparagine glycan. Positions 63 to 172 (PTIVKVFKQP…YGPSGQKTVQ (110 aa)) constitute an Ig-like V-type 2 domain. 4 disulfides stabilise this stretch: C95/C158, C208/C251, C292/C330, and C373/C423. 3 consecutive Ig-like C2-type domains span residues 183–266 (PTEQ…TAIT), 271–347 (DLSL…ESLT), and 354–439 (PQIK…LNVS). A helical transmembrane segment spans residues 466-487 (LIVGIVLRLLHGALVAGVVYWL). The Cytoplasmic portion of the chain corresponds to 488-521 (YVKKSKTASKHVNKDLGNLEENKKLEQNNHRTEA). The segment at 500–521 (NKDLGNLEENKKLEQNNHRTEA) is disordered. Over residues 507–521 (EENKKLEQNNHRTEA) the composition is skewed to basic and acidic residues.

Homodimer. Interacts (via extracellular domain) with CD6 (via extracellular domain). Homodimerization and interaction with CD6 involve the same region and cannot occur simultaneously. The affinity for CD6 is much higher than the affinity for self-association. Interacts (via glycosylated extracellular domain) with LGALS1 and LGALS3. Interaction with LGALS1 or LGALS3 inhibits interaction with CD6. Glycosylated.

It localises to the cell membrane. It is found in the cell projection. The protein resides in the axon. Its subcellular location is the dendrite. Cell adhesion molecule that mediates both heterotypic cell-cell contacts via its interaction with CD6, as well as homotypic cell-cell contacts. Promotes T-cell activation and proliferation via its interactions with CD6. Contributes to the formation and maturation of the immunological synapse via its interactions with CD6. Mediates homotypic interactions with cells that express ALCAM. Mediates attachment of dendritic cells onto endothelial cells via homotypic interaction. Inhibits endothelial cell migration and promotes endothelial tube formation via homotypic interactions. Required for normal organization of the lymph vessel network. Required for normal hematopoietic stem cell engraftment in the bone marrow. Plays a role in hematopoiesis; required for normal numbers of hematopoietic stem cells in bone marrow. Promotes in vitro osteoblast proliferation and differentiation. Promotes neurite extension, axon growth and axon guidance; axons grow preferentially on surfaces that contain ALCAM. Mediates outgrowth and pathfinding for retinal ganglion cell axons. This is CD166 antigen (ALCAM) from Canis lupus familiaris (Dog).